The sequence spans 899 residues: Translation initiation factor IF-2 (899 aa).

2 disordered regions span residues 65-84 (KTRSTLNVPSTGGKSKSVQI) and 91-310 (TYVK…SFNK). Residues 68–82 (STLNVPSTGGKSKSV) show a composition bias toward polar residues. Residues 108 to 164 (QARREAEEQAQRAAEEQAKREAELREAAEKAKRAADEQAKREAAEKAKRDVAEKEKV) show a composition bias toward basic and acidic residues. Over residues 165–174 (TNQQNENMTK) the composition is skewed to polar residues. The segment covering 177-236 (QAEKAKREAEAAELKRKAEEAARLKVEEEARRIAEEARRMAEENAGRWEAESAKPEESAD) has biased composition (basic and acidic residues). A compositionally biased stretch (basic residues) spans 262 to 276 (SRSRAGKVTKQKKGN). Residues 277-290 (RQSESKADREEARA) show a composition bias toward basic and acidic residues. The 170-residue stretch at 398–567 (ARAPVVTIMG…LLQAEVLELK (170 aa)) folds into the tr-type G domain. The G1 stretch occupies residues 407 to 414 (GHVDHGKT). A GTP-binding site is contributed by 407–414 (GHVDHGKT). Residues 432-436 (GITQH) form a G2 region. The interval 453–456 (DTPG) is G3. Residues 453-457 (DTPGH) and 507-510 (NKID) contribute to the GTP site. The G4 stretch occupies residues 507-510 (NKID). A G5 region spans residues 543–545 (SAK).

Belongs to the TRAFAC class translation factor GTPase superfamily. Classic translation factor GTPase family. IF-2 subfamily.

The protein localises to the cytoplasm. In terms of biological role, one of the essential components for the initiation of protein synthesis. Protects formylmethionyl-tRNA from spontaneous hydrolysis and promotes its binding to the 30S ribosomal subunits. Also involved in the hydrolysis of GTP during the formation of the 70S ribosomal complex. In Pectobacterium carotovorum subsp. carotovorum (strain PC1), this protein is Translation initiation factor IF-2.